The following is a 555-amino-acid chain: Connector enhancer of kinase suppressor of ras 3 (555 aa).

Residues 7 to 72 (WSPKQVVDWT…LEAVDLLCAL (66 aa)) enclose the SAM domain. The CRIC domain maps to 80–174 (TMKNLVLKLR…TAVQKDCLIA (95 aa)). The PDZ domain maps to 211–293 (EVHLPNVRPG…GVVLLLKKRP (83 aa)). 3 disordered regions span residues 308-333 (RWKP…MDAS), 362-389 (SFGY…SFLD), and 518-538 (PFQE…ASSG). The segment covering 311–329 (PPLVQTSPPPTTTQSPEST) has biased composition (low complexity). Residues 325 to 546 (SPESTMDASL…SGEPSLLVSW (222 aa)) enclose the DUF1170 domain. Phosphoserine occurs at positions 381 and 383.

It belongs to the CNKSR family. Interacts with epithelial sodium channel ENaC. Interacts directly with SCNN1A (ENaC subunit alpha) and SCNN1B (ENaC subunit beta) C-terminal tails. Interacts with ENaC regulatory proteins NEDD4L, RAF1 and SGK1. In terms of tissue distribution, expressed in kidney.

The protein resides in the cytoplasm. It localises to the apical cell membrane. In terms of biological role, involved in transepithelial sodium transport. Regulates aldosterone-induced and epithelial sodium channel (ENaC)-mediated sodium transport through regulation of ENaC cell surface expression. Acts as a scaffold protein coordinating the assembly of an ENaC-regulatory complex (ERC). This is Connector enhancer of kinase suppressor of ras 3 (Cnksr3) from Mus musculus (Mouse).